The following is a 230-amino-acid chain: Phosphatidylserine decarboxylase proenzyme (230 aa).

Serine 186 functions as the Schiff-base intermediate with substrate; via pyruvic acid in the catalytic mechanism. Position 186 is a pyruvic acid (Ser); by autocatalysis (serine 186).

The protein belongs to the phosphatidylserine decarboxylase family. PSD-A subfamily. Heterodimer of a large membrane-associated beta subunit and a small pyruvoyl-containing alpha subunit. Pyruvate serves as cofactor. Post-translationally, is synthesized initially as an inactive proenzyme. Formation of the active enzyme involves a self-maturation process in which the active site pyruvoyl group is generated from an internal serine residue via an autocatalytic post-translational modification. Two non-identical subunits are generated from the proenzyme in this reaction, and the pyruvate is formed at the N-terminus of the alpha chain, which is derived from the carboxyl end of the proenzyme. The post-translation cleavage follows an unusual pathway, termed non-hydrolytic serinolysis, in which the side chain hydroxyl group of the serine supplies its oxygen atom to form the C-terminus of the beta chain, while the remainder of the serine residue undergoes an oxidative deamination to produce ammonia and the pyruvoyl prosthetic group on the alpha chain.

It is found in the cell membrane. The enzyme catalyses a 1,2-diacyl-sn-glycero-3-phospho-L-serine + H(+) = a 1,2-diacyl-sn-glycero-3-phosphoethanolamine + CO2. The protein operates within phospholipid metabolism; phosphatidylethanolamine biosynthesis; phosphatidylethanolamine from CDP-diacylglycerol: step 2/2. In terms of biological role, catalyzes the formation of phosphatidylethanolamine (PtdEtn) from phosphatidylserine (PtdSer). This chain is Phosphatidylserine decarboxylase proenzyme, found in Wolbachia pipientis wMel.